The sequence spans 255 residues: Acetylglutamate kinase (255 aa).

Substrate is bound by residues 40 to 41 (GG), arginine 62, and asparagine 153.

The protein belongs to the acetylglutamate kinase family. ArgB subfamily.

Its subcellular location is the cytoplasm. The catalysed reaction is N-acetyl-L-glutamate + ATP = N-acetyl-L-glutamyl 5-phosphate + ADP. The protein operates within amino-acid biosynthesis; L-arginine biosynthesis; N(2)-acetyl-L-ornithine from L-glutamate: step 2/4. In terms of biological role, catalyzes the ATP-dependent phosphorylation of N-acetyl-L-glutamate. This Bacillus cereus (strain AH820) protein is Acetylglutamate kinase.